A 393-amino-acid polypeptide reads, in one-letter code: MQQTKKLTHSDITIAVMSGPFLQRGEPALVSKWYRTKMALACGVDLVVELPYAFSTQKAETFANGAISILNALHVSEICFGSEDGQIENFYNTISVQKNEEETFNRLVKQFMNAGNSYAKATSEAFLHILSSEKNIDMSQPNNILGFQYIKAILMQNSSMQAQTIKRFASHYHDETFNDQHIASATSIRKQLFSENSSFTEIESFIPKATASLLASYKQNYGTLHNWEQYFSFFKYKLMTMSPEDLRHIYEIEEGLEHRILSKIQTSSSFHLFMEALKTKRYTWTRLQRACTHILTNTTKEEIYCANIEQHAPYIRLLGMSQKGQTYLSKNKKKIELPILTHTKTFDHPTLHIERKANSVYFSIMKEPLRTQLLKRDATHHPIRYDETTAKFL.

ATP is bound by residues Gly81, Asn142, and Arg167.

Belongs to the TmcAL family.

The protein resides in the cytoplasm. It carries out the reaction cytidine(34) in elongator tRNA(Met) + acetate + ATP = N(4)-acetylcytidine(34) in elongator tRNA(Met) + AMP + diphosphate. Catalyzes the formation of N(4)-acetylcytidine (ac(4)C) at the wobble position of elongator tRNA(Met), using acetate and ATP as substrates. First activates an acetate ion to form acetyladenylate (Ac-AMP) and then transfers the acetyl group to tRNA to form ac(4)C34. This Bacillus cereus (strain AH820) protein is tRNA(Met) cytidine acetate ligase.